Reading from the N-terminus, the 165-residue chain is UPF0262 protein Sala_0765 (165 aa).

This sequence belongs to the UPF0262 family.

This Sphingopyxis alaskensis (strain DSM 13593 / LMG 18877 / RB2256) (Sphingomonas alaskensis) protein is UPF0262 protein Sala_0765.